The following is a 151-amino-acid chain: Acidic phospholipase A2 1 (151 aa).

The N-terminal stretch at 1-27 is a signal peptide; the sequence is MYPAHLLVLLAVCVSLLGAASIPARPL. 7 disulfides stabilise this stretch: Cys-38-Cys-104, Cys-54-Cys-151, Cys-56-Cys-72, Cys-71-Cys-132, Cys-78-Cys-125, Cys-88-Cys-118, and Cys-111-Cys-123. Ca(2+) contacts are provided by Tyr-55, Gly-57, and Gly-59. The active site involves His-75. Asp-76 is a binding site for Ca(2+). Residue Asp-126 is part of the active site.

Belongs to the phospholipase A2 family. Group I subfamily. D49 sub-subfamily. It depends on Ca(2+) as a cofactor. As to expression, expressed by the venom gland.

Its subcellular location is the secreted. The catalysed reaction is a 1,2-diacyl-sn-glycero-3-phosphocholine + H2O = a 1-acyl-sn-glycero-3-phosphocholine + a fatty acid + H(+). Functionally, PLA2 catalyzes the calcium-dependent hydrolysis of the 2-acyl groups in 3-sn-phosphoglycerides. In Tropidechis carinatus (Australian rough-scaled snake), this protein is Acidic phospholipase A2 1.